A 663-amino-acid polypeptide reads, in one-letter code: Sodium/potassium/calcium exchanger 1 (663 aa).

Residues 32 to 128 (SPSAIPALLT…DLFSVEERRQ (97 aa)) are Extracellular-facing. Asparagine 59, asparagine 66, and asparagine 100 each carry an N-linked (GlcNAc...) asparagine glycan. The chain crosses the membrane as a helical span at residues 129-149 (GWVVLHIFGMMYVFVALAIVC). Residues 150–173 (DEYFVPALGVITEKLQISEDVAGA) are Cytoplasmic-facing. Residues 170–210 (VAGATFMAAGGSAPELFTSLIGVFISHSNVGIGTIVGSAVF) form an Alpha-1 repeat. Residues 174 to 194 (TFMAAGGSAPELFTSLIGVFI) form a helical membrane-spanning segment. Residues 195 to 200 (SHSNVG) lie on the Extracellular side of the membrane. The chain crosses the membrane as a helical span at residues 201–221 (IGTIVGSAVFNILFVIGTCAL). The Cytoplasmic portion of the chain corresponds to 222–228 (FSREILH). Residues 229–253 (LTWWPLFRDISFYIVDLLMLILFFL) form a helical membrane-spanning segment. At 254 to 259 (DSVIDW) the chain is on the extracellular side. The chain crosses the membrane as a helical span at residues 260–276 (WESLLLLTAYATYVFTM). Residues 277 to 471 (KHNVSLEQWV…SLEWPETRKK (195 aa)) are Cytoplasmic-facing. 2 disordered regions span residues 308-343 (KSSVAVAEDGTKPADGKKLQPTTALQRGTSSASLHN) and 384-465 (LTGQ…SLEW). Positions 316-325 (DGTKPADGKK) are enriched in basic and acidic residues. Polar residues-rich tracts occupy residues 327–343 (QPTTALQRGTSSASLHN) and 399–412 (ASQNTVQVTPASDS). Serine 337 carries the phosphoserine modification. The span at 413–423 (EPSKDKQKEDT) shows a compositional bias: basic and acidic residues. The span at 434 to 461 (DNSEDSSSDSEDDSDDDSTDDEENDEPL) shows a compositional bias: acidic residues. The chain crosses the membrane as a helical span at residues 472-492 (QAIYLFLFPIVFPLWSTIPDV). Topologically, residues 493–499 (RNPDSKK) are extracellular. A helical transmembrane segment spans residues 500–520 (FFVITFFGSIIWIAAFSYLMV). Topologically, residues 521–535 (WWAHQVGETIGISEE) are cytoplasmic. The helical transmembrane segment at 536-556 (IMGLTILAAGTSIPDLITSVI) threads the bilayer. Residues 543 to 574 (AAGTSIPDLITSVIVARKGLGDMAVSSSVGSN) form an Alpha-2 repeat. At 557 to 574 (VARKGLGDMAVSSSVGSN) the chain is on the extracellular side. Residues 575-595 (IFDITVGLPVPWFLYSVFNGF) traverse the membrane as a helical segment. The Cytoplasmic segment spans residues 596-604 (SPVAVSSNG). A helical membrane pass occupies residues 605–625 (LFCAIVLLFLMLLFVIISIAL). Over 626–632 (CKWKMNK) the chain is Extracellular. A helical transmembrane segment spans residues 633-653 (ILGVTMFALYFVFLIISVMLE). Topologically, residues 654-663 (DRIISCPVSV) are cytoplasmic.

Belongs to the Ca(2+):cation antiporter (CaCA) (TC 2.A.19) family. SLC24A subfamily. Post-translationally, the uncleaved signal sequence is required for efficient membrane targeting and proper membrane integration and topology. Retinal rods. Localizes to the inner segment of rod photoreceptors.

It is found in the cell membrane. It carries out the reaction Ca(2+)(out) + K(+)(out) + 4 Na(+)(in) = Ca(2+)(in) + K(+)(in) + 4 Na(+)(out). Functionally, calcium, potassium:sodium antiporter that transports 1 Ca(2+) and 1 K(+) in exchange for 4 Na(+). Critical component of the visual transduction cascade, controlling the calcium concentration of outer segments during light and darkness. Light causes a rapid lowering of cytosolic free calcium in the outer segment of both retinal rod and cone photoreceptors and the light-induced lowering of calcium is caused by extrusion via this protein which plays a key role in the process of light adaptation. The protein is Sodium/potassium/calcium exchanger 1 (SLC24A1) of Gallus gallus (Chicken).